The sequence spans 340 residues: Coproporphyrin III ferrochelatase (340 aa).

The Fe-coproporphyrin III site is built by serine 52 and tyrosine 121. Fe(2+)-binding residues include histidine 177 and glutamate 260.

It belongs to the ferrochelatase family.

The protein localises to the cytoplasm. The enzyme catalyses Fe-coproporphyrin III + 2 H(+) = coproporphyrin III + Fe(2+). It functions in the pathway porphyrin-containing compound metabolism; protoheme biosynthesis. Its function is as follows. Involved in coproporphyrin-dependent heme b biosynthesis. Catalyzes the insertion of ferrous iron into coproporphyrin III to form Fe-coproporphyrin III. In Mycobacteroides abscessus (strain ATCC 19977 / DSM 44196 / CCUG 20993 / CIP 104536 / JCM 13569 / NCTC 13031 / TMC 1543 / L948) (Mycobacterium abscessus), this protein is Coproporphyrin III ferrochelatase.